The sequence spans 433 residues: Mblk-1-related factor 1 (433 aa).

The 53-residue stretch at 145-197 folds into the HTH psq-type 1 domain; the sequence is NKSNILRRNYTVEDLTQAVEDIRQGKLGTRRASVVYGIPRSTLRNKIYKLEAE. The H-T-H motif DNA-binding region spans 173-193; it reads TRRASVVYGIPRSTLRNKIYK. The span at 235–254 shows a compositional bias: low complexity; it reads GNQSDSSSSSPHASMCPSSP. Disordered stretches follow at residues 235 to 278 and 304 to 338; these read GNQS…SCSP and ANIS…PKRG. The segment covering 304-319 has biased composition (polar residues); it reads ANISNVDTHTPTPISE. The segment covering 320–332 has biased composition (basic and acidic residues); it reads KSQKMHGNEEWKR. Residues 334-386 form the HTH psq-type 2 domain; it reads RPKRGQYRKYDKNALDEAVRSVRRGEMTVHRAGSFFGVPHSTLEYKVKERNLM. Residues 362–382 constitute a DNA-binding region (H-T-H motif); that stretch reads VHRAGSFFGVPHSTLEYKVKE. The segment at 393–433 is disordered; that stretch reads LYSHDSSTSEDGSQLVTSTISEKSDSSSHTSTPIPFPISLV. Residues 396–408 show a composition bias toward polar residues; it reads HDSSTSEDGSQLV. Low complexity predominate over residues 409-424; that stretch reads TSTISEKSDSSSHTST.

In terms of tissue distribution, expressed in AIM, RIC, AIZ, ADF, ADL, ASK, AWA, AUA, AIN, RIH (or RIR) and RIF head neurons and, in PVP, PVQ and DVA (or DVC) tail neurons, some intestinal cells, somatic gonad and vulva.

The protein localises to the nucleus. In terms of biological role, may act as transcription activator. Plays a role in neurogenesis by regulating neurite pruning between left and right AIM neurons and left and right RIF neurons during larval development. Regulates olfactory plasticity. This Caenorhabditis elegans protein is Mblk-1-related factor 1.